The following is a 504-amino-acid chain: ATP synthase subunit alpha (504 aa).

171-178 serves as a coordination point for ATP; sequence GDRQTGKT.

This sequence belongs to the ATPase alpha/beta chains family. In terms of assembly, F-type ATPases have 2 components, CF(1) - the catalytic core - and CF(0) - the membrane proton channel. CF(1) has five subunits: alpha(3), beta(3), gamma(1), delta(1), epsilon(1). CF(0) has three main subunits: a(1), b(2) and c(9-12). The alpha and beta chains form an alternating ring which encloses part of the gamma chain. CF(1) is attached to CF(0) by a central stalk formed by the gamma and epsilon chains, while a peripheral stalk is formed by the delta and b chains.

It localises to the cell inner membrane. The enzyme catalyses ATP + H2O + 4 H(+)(in) = ADP + phosphate + 5 H(+)(out). Its function is as follows. Produces ATP from ADP in the presence of a proton gradient across the membrane. The alpha chain is a regulatory subunit. This is ATP synthase subunit alpha from Sulfurovum sp. (strain NBC37-1).